The following is a 427-amino-acid chain: Histidine--tRNA ligase (427 aa).

It belongs to the class-II aminoacyl-tRNA synthetase family. Homodimer.

The protein resides in the cytoplasm. The catalysed reaction is tRNA(His) + L-histidine + ATP = L-histidyl-tRNA(His) + AMP + diphosphate + H(+). In Chloroherpeton thalassium (strain ATCC 35110 / GB-78), this protein is Histidine--tRNA ligase.